A 118-amino-acid chain; its full sequence is Large ribosomal subunit protein bL20 (118 aa).

The protein belongs to the bacterial ribosomal protein bL20 family.

Binds directly to 23S ribosomal RNA and is necessary for the in vitro assembly process of the 50S ribosomal subunit. It is not involved in the protein synthesizing functions of that subunit. The chain is Large ribosomal subunit protein bL20 from Tolumonas auensis (strain DSM 9187 / NBRC 110442 / TA 4).